Here is a 22-residue protein sequence, read N- to C-terminus: 65 kDa membrane protein (22 aa).

Positions 1–22 (AAKPLDKSSSSLHHGYSKVHVP) are disordered.

Its subcellular location is the cell membrane. Binds various plasma and ECM-proteins. The polypeptide is 65 kDa membrane protein (Staphylococcus aureus).